A 252-amino-acid polypeptide reads, in one-letter code: MIKKRIIPCLDVKDGRVVKGIQFKGLRDIGNPVDFALYYNEQGADELVFLDISRTEAGHDLVLDVISETAEKLFIPLTVGGGISTIDDISQLLNHGADKVSLNSSALKNPSFIKEASEKFGRQCICIAIDSNYDSELNDYFCYTHGGKQRTDKRVYDWVQEVEALGAGELLITSMTHDGMKQGFDVSHLHEIEKLVNIPVIASGGGGNPEHFVDLFKETNVSAGLAASILHDKETTVNQIKSSMKRGGIPVR.

Residues D11 and D130 contribute to the active site.

This sequence belongs to the HisA/HisF family. As to quaternary structure, heterodimer of HisH and HisF.

Its subcellular location is the cytoplasm. It catalyses the reaction 5-[(5-phospho-1-deoxy-D-ribulos-1-ylimino)methylamino]-1-(5-phospho-beta-D-ribosyl)imidazole-4-carboxamide + L-glutamine = D-erythro-1-(imidazol-4-yl)glycerol 3-phosphate + 5-amino-1-(5-phospho-beta-D-ribosyl)imidazole-4-carboxamide + L-glutamate + H(+). The protein operates within amino-acid biosynthesis; L-histidine biosynthesis; L-histidine from 5-phospho-alpha-D-ribose 1-diphosphate: step 5/9. In terms of biological role, IGPS catalyzes the conversion of PRFAR and glutamine to IGP, AICAR and glutamate. The HisF subunit catalyzes the cyclization activity that produces IGP and AICAR from PRFAR using the ammonia provided by the HisH subunit. The chain is Imidazole glycerol phosphate synthase subunit HisF from Staphylococcus saprophyticus subsp. saprophyticus (strain ATCC 15305 / DSM 20229 / NCIMB 8711 / NCTC 7292 / S-41).